The following is a 426-amino-acid chain: Adenylosuccinate synthetase (426 aa).

GTP-binding positions include 12 to 18 (GDEGKGK) and 40 to 42 (GHT). Aspartate 13 serves as the catalytic Proton acceptor. The Mg(2+) site is built by aspartate 13 and glycine 40. IMP is bound by residues 13–16 (DEGK), 38–41 (NAGH), threonine 131, arginine 145, glutamine 226, threonine 241, and arginine 305. The Proton donor role is filled by histidine 41. Position 301 to 307 (301 to 307 (ATTGRKR)) interacts with substrate. Residues arginine 307, 333-335 (KLD), and 415-417 (SVG) contribute to the GTP site.

It belongs to the adenylosuccinate synthetase family. As to quaternary structure, homodimer. Requires Mg(2+) as cofactor.

Its subcellular location is the cytoplasm. The catalysed reaction is IMP + L-aspartate + GTP = N(6)-(1,2-dicarboxyethyl)-AMP + GDP + phosphate + 2 H(+). It functions in the pathway purine metabolism; AMP biosynthesis via de novo pathway; AMP from IMP: step 1/2. Plays an important role in the de novo pathway of purine nucleotide biosynthesis. Catalyzes the first committed step in the biosynthesis of AMP from IMP. The sequence is that of Adenylosuccinate synthetase from Nitratidesulfovibrio vulgaris (strain DP4) (Desulfovibrio vulgaris).